The following is a 544-amino-acid chain: Phosphoenolpyruvate carboxykinase (ATP) (544 aa).

Residue 246–253 participates in ATP binding; it reads GLSGTGKT.

This sequence belongs to the phosphoenolpyruvate carboxykinase (ATP) family.

The enzyme catalyses oxaloacetate + ATP = phosphoenolpyruvate + ADP + CO2. It participates in carbohydrate biosynthesis; gluconeogenesis. This Candida glabrata (strain ATCC 2001 / BCRC 20586 / JCM 3761 / NBRC 0622 / NRRL Y-65 / CBS 138) (Yeast) protein is Phosphoenolpyruvate carboxykinase (ATP) (PCK1).